The chain runs to 100 residues: Small ribosomal subunit protein uS14c (100 aa).

Belongs to the universal ribosomal protein uS14 family. As to quaternary structure, part of the 30S ribosomal subunit.

It localises to the plastid. The protein resides in the chloroplast. Its function is as follows. Binds 16S rRNA, required for the assembly of 30S particles. The chain is Small ribosomal subunit protein uS14c from Lotus japonicus (Lotus corniculatus var. japonicus).